We begin with the raw amino-acid sequence, 657 residues long: MGEFKIHSKFKPMGDQPQAIDTILKSIKQGNEFQTLLGVTGSGKTFTMANIIENLQRPTLILAHNKTLAAQLCSEFKEFFPENIVEYFVSYYDYYQPEAYVPQTDTFIEKDASINDEIDKLRHSATSALFERRDVIIVASVSCIYGLGNPDEYKKLTISLRKGMQKERDEIIKKLIEIQYERNDIDFSRGTFRVRGDLLDIIPSSTSSKGIRIEFFGDEIDRIREFDVLTGTIIGERNHVSIFPASHFATSKETVERSLGEIENELENRLRELNSQEKLLEAQRLRQRTNFDIEMIREMGYCSGIENYSRILDGRAPGTPPKTLIDYFPEDFLLFIDESHVTLPQVRAMYAGDRSRKNTLVDYGFRLPCAYDNRPLKFEEFEKKINQVMFVSATPAQYELEHSQSIAEQVIRPTGLLDPEIIIKPVKGQIDDLYTEIQETISRGYRILITTLTKRMAEDLTKYMIELGVKATYMHSDIDTIERMKIIRDLRLGEYDVLVGINLLREGLDIPEVALVAILDADKEGFLRSETSLIQTIGRAARNSESKVIMYADNITKSMKKAISETERRRKIQTEYNEEHGIIPQTINKEVRELIEATKVAEESTEYGMEVTKSLTKKEAKKLIKEYTDEMKLAAKNLQFERAAQLRDKIEELKGKE.

In terms of domain architecture, Helicase ATP-binding spans 25 to 182; it reads KSIKQGNEFQ…KKLIEIQYER (158 aa). 38-45 contacts ATP; the sequence is GVTGSGKT. The Beta-hairpin motif lies at 91–114; that stretch reads YYDYYQPEAYVPQTDTFIEKDASI. The region spanning 429 to 595 is the Helicase C-terminal domain; it reads QIDDLYTEIQ…TINKEVRELI (167 aa). The region spanning 621–656 is the UVR domain; sequence KKLIKEYTDEMKLAAKNLQFERAAQLRDKIEELKGK.

This sequence belongs to the UvrB family. Forms a heterotetramer with UvrA during the search for lesions. Interacts with UvrC in an incision complex.

Its subcellular location is the cytoplasm. The UvrABC repair system catalyzes the recognition and processing of DNA lesions. A damage recognition complex composed of 2 UvrA and 2 UvrB subunits scans DNA for abnormalities. Upon binding of the UvrA(2)B(2) complex to a putative damaged site, the DNA wraps around one UvrB monomer. DNA wrap is dependent on ATP binding by UvrB and probably causes local melting of the DNA helix, facilitating insertion of UvrB beta-hairpin between the DNA strands. Then UvrB probes one DNA strand for the presence of a lesion. If a lesion is found the UvrA subunits dissociate and the UvrB-DNA preincision complex is formed. This complex is subsequently bound by UvrC and the second UvrB is released. If no lesion is found, the DNA wraps around the other UvrB subunit that will check the other stand for damage. The sequence is that of UvrABC system protein B from Clostridium botulinum (strain Eklund 17B / Type B).